Consider the following 61-residue polypeptide: Small ribosomal subunit protein uS14 (61 aa).

The Zn(2+) site is built by Cys24, Cys27, Cys40, and Cys43.

Belongs to the universal ribosomal protein uS14 family. Zinc-binding uS14 subfamily. In terms of assembly, part of the 30S ribosomal subunit. Contacts proteins S3 and S10. Requires Zn(2+) as cofactor.

In terms of biological role, binds 16S rRNA, required for the assembly of 30S particles and may also be responsible for determining the conformation of the 16S rRNA at the A site. This is Small ribosomal subunit protein uS14 from Macrococcus caseolyticus (strain JCSC5402) (Macrococcoides caseolyticum).